Here is a 72-residue protein sequence, read N- to C-terminus: DNA-directed RNA polymerase subunit omega (72 aa).

It belongs to the RNA polymerase subunit omega family. The RNAP catalytic core consists of 2 alpha, 1 beta, 1 beta' and 1 omega subunit. When a sigma factor is associated with the core the holoenzyme is formed, which can initiate transcription.

The catalysed reaction is RNA(n) + a ribonucleoside 5'-triphosphate = RNA(n+1) + diphosphate. Promotes RNA polymerase assembly. Latches the N- and C-terminal regions of the beta' subunit thereby facilitating its interaction with the beta and alpha subunits. This Staphylococcus aureus (strain Mu3 / ATCC 700698) protein is DNA-directed RNA polymerase subunit omega.